Consider the following 201-residue polypeptide: MSRYRGPRFKKIRRLGALPGLTSKRPSPGSDLRNQSRSGKRSQYRIRLEEKQKLRFHYGLTERQLLRYVRIAGKAKGSTGQVLLQLLEMRLDNILFRLGMASTIPGARQLVNHRHILVNGRIVDIPSYRCKPQDIITTRDEQRSRALIQKSIDSSPHEEVPKHLTLYPFQYKALVNKIIDSQWIGLKINELLVVEYYSRQT.

The tract at residues 15–43 is disordered; that stretch reads LGALPGLTSKRPSPGSDLRNQSRSGKRSQ. Residues 89–150 form the S4 RNA-binding domain; that stretch reads MRLDNILFRL…EQRSRALIQK (62 aa).

It belongs to the universal ribosomal protein uS4 family. Part of the 30S ribosomal subunit. Contacts protein S5. The interaction surface between S4 and S5 is involved in control of translational fidelity.

The protein localises to the plastid. Its subcellular location is the chloroplast. In terms of biological role, one of the primary rRNA binding proteins, it binds directly to 16S rRNA where it nucleates assembly of the body of the 30S subunit. Its function is as follows. With S5 and S12 plays an important role in translational accuracy. The protein is Small ribosomal subunit protein uS4c (rps4) of Ceratophyllum demersum (Rigid hornwort).